The chain runs to 383 residues: MKNKLPPFIEIYRALIATPSISATEEALDQSNADLITLLADWFKDLGFNVEVQPVPGTRNKFNMLASTGQGAGGLLLAGHTDTVPFDDGRWTRDPFTLTEHDGKLYGLGTADMKGFFAFILDALRDVDVTKLAKPLYILATADEETSMAGARYFAETTALRPDCAIIGEPTSLQPVRAHKGHISNAIRIQGQSGHSSDPARGVNAIELMHDAIGHILQLRDKLKERYHYEAFTVPYPTLNLGHIHGGDASNRICACCELHMDIRPLPGMTLNELNGLLNDALAPVSERWPGRLTVDELHPPIPGYECPPNHQLVEVVEKLLGAKTEVVNYCTEAPFIQTLCPTLVLGPGSINQAHQPDEYLETRFIKPTRELITQVIHHFCWH.

Histidine 80 provides a ligand contact to Zn(2+). Aspartate 82 is a catalytic residue. Residue aspartate 112 participates in Zn(2+) binding. Glutamate 144 is an active-site residue. 3 residues coordinate Zn(2+): glutamate 145, glutamate 169, and histidine 355.

This sequence belongs to the peptidase M20A family. ArgE subfamily. Homodimer. It depends on Zn(2+) as a cofactor. Co(2+) serves as cofactor. The cofactor is glutathione.

Its subcellular location is the cytoplasm. The enzyme catalyses N(2)-acetyl-L-ornithine + H2O = L-ornithine + acetate. It participates in amino-acid biosynthesis; L-arginine biosynthesis; L-ornithine from N(2)-acetyl-L-ornithine (linear): step 1/1. Functionally, catalyzes the hydrolysis of the amide bond of N(2)-acetylated L-amino acids. Cleaves the acetyl group from N-acetyl-L-ornithine to form L-ornithine, an intermediate in L-arginine biosynthesis pathway, and a branchpoint in the synthesis of polyamines. The chain is Acetylornithine deacetylase from Escherichia coli (strain SMS-3-5 / SECEC).